A 564-amino-acid chain; its full sequence is 5-hydroxytryptamine receptor 1 (564 aa).

Positions 1–26 (MALSGQDWRRHQSHRQHRNHRTQGNH) are disordered. Basic residues predominate over residues 11 to 23 (HQSHRQHRNHRTQ). The helical transmembrane segment at 29–51 (LISTATLTLFVLFLSSWIAYAAG) threads the bilayer. Tandem repeats lie at residues 89–90 (GS), 91–92 (GS), 93–94 (GS), 95–96 (GS), 97–98 (GS), 99–100 (GS), 101–102 (GS), 103–104 (GS), and 105–106 (GS). Positions 89-106 (GSGSGSGSGSGSGSGSGS) are 9 X 2 AA tandem repeats of G-S. Residues 165-188 (VSIVLLIVILGTVVGNVLVCIAVC) traverse the membrane as a helical segment. Over 189 to 198 (MVRKLRRPCN) the chain is Cytoplasmic. A helical transmembrane segment spans residues 199–222 (YLLVSLALSDLCVALLVMPMALLY). The Extracellular portion of the chain corresponds to 223–236 (EVLEKWNFGPLLCD). Cysteine 235 and cysteine 314 are oxidised to a cystine. A helical membrane pass occupies residues 237-258 (IWVSFDVLCCTASILNLCAISV). The agonist binding stretch occupies residues 238 to 247 (WVSFDVLCCT). Residues aspartate 242 and threonine 247 each contribute to the ergotamine site. Positions 259-261 (DRY) match the DRY motif; important for ligand-induced conformation changes motif. Residues 259-278 (DRYLAITKPLEYGVKRTPRR) lie on the Cytoplasmic side of the membrane. The helical transmembrane segment at 279–302 (MMLCVGIVWLAAACISLPPLLILG) threads the bilayer. The Extracellular portion of the chain corresponds to 303–330 (NEHEDEEGQPICTVCQNFAYQIYATLGS). Residues 331-353 (FYIPLSVMLFVYYQIFRAARRIV) traverse the membrane as a helical segment. At 354–454 (LEEKRAQTHL…QLAKEKKAST (101 aa)) the chain is on the cytoplasmic side. Residues 367–396 (LNGTGSPSAPQAPPLGHTELASSGNGQRHS) form a disordered region. The segment covering 386 to 396 (LASSGNGQRHS) has biased composition (polar residues). The chain crosses the membrane as a helical span at residues 455-476 (TLGIIMSAFTVCWLPFFILALI). The Extracellular portion of the chain corresponds to 477-487 (RPFETMHVPAS). A helical transmembrane segment spans residues 488–510 (LSSLFLWLGYANSLLNPIIYATL). Residues 503–507 (NPIIY) carry the NPxxY motif; important for ligand-induced conformation changes and signaling motif. The Cytoplasmic portion of the chain corresponds to 511–564 (NRDFRKPFQEILYFRCSSLNTMMRENYYQDQYGEPPSQRVMLGDERHGARESFL).

Belongs to the G-protein coupled receptor 1 family. 5-hydroxytryptamine receptor subfamily. In terms of tissue distribution, expressed predominantly in adult heads.

It is found in the cell membrane. In terms of biological role, G-protein coupled receptor for 5-hydroxytryptamine (serotonin). Also functions as a receptor for various alkaloids. Ligand binding causes a conformation change that triggers signaling via guanine nucleotide-binding proteins (G proteins) and modulates the activity of down-stream effectors, such as adenylate cyclase. Signaling activates adenylate cyclase activity. The protein is 5-hydroxytryptamine receptor 1 (5-HT7) of Drosophila melanogaster (Fruit fly).